Consider the following 50-residue polypeptide: Photosystem II reaction center protein M (50 aa).

A helical transmembrane segment spans residues 7–27 (GFVASLLFVGVPTIFLIGLFI).

Belongs to the PsbM family. PSII is composed of 1 copy each of membrane proteins PsbA, PsbB, PsbC, PsbD, PsbE, PsbF, PsbH, PsbI, PsbJ, PsbK, PsbL, PsbM, PsbT, PsbX, PsbY, Psb30/Ycf12, peripheral proteins PsbO, CyanoQ (PsbQ), PsbU, PsbV and a large number of cofactors. It forms dimeric complexes.

It localises to the cellular thylakoid membrane. In terms of biological role, one of the components of the core complex of photosystem II (PSII). PSII is a light-driven water:plastoquinone oxidoreductase that uses light energy to abstract electrons from H(2)O, generating O(2) and a proton gradient subsequently used for ATP formation. It consists of a core antenna complex that captures photons, and an electron transfer chain that converts photonic excitation into a charge separation. This subunit is found at the monomer-monomer interface. The polypeptide is Photosystem II reaction center protein M (Prochlorococcus marinus (strain MIT 9301)).